We begin with the raw amino-acid sequence, 236 residues long: Homeobox protein notochord (236 aa).

Residues 138–197 (MKRIRTVFTPEQLEKLEKEFLKQQYMVGTERVDLASTLNLTETQVKVWFQNRRIKWRKQS) constitute a DNA-binding region (homeobox). Positions 209–236 (GVIPADSSDHTDDSRETEEDEDDLDVEL) are disordered. Acidic residues predominate over residues 223–236 (RETEEDEDDLDVEL).

Expressed throughout the embryo during pre-gastrula stages. Localized to the dorsal lip of the blastopore (Spemann organizer) during early gastrulation, after which expression continues in tissues derived from the organizer. Expressed in the notochord during mid-gastrulation. During neurulation, expressed in the notochord, archenteron roof and the prospective floor plate. Also expressed in the region that will become the epiphysis, the pineal body precursor. By the early tailbud stages, expression is limited to posterior notochord and floor plate before becoming restricted to the tip of the tail in the tadpole.

The protein resides in the nucleus. Functionally, transcriptional repressor. Plays a fundamental role in notochord formation, acting within the mesodermal region. The sequence is that of Homeobox protein notochord (noto) from Xenopus laevis (African clawed frog).